A 1067-amino-acid chain; its full sequence is MDAQFTLELTQLLFQSIAPDTTQITEATRALETKYLKEPGSLLSLFHIMGTCENPQVRQLAAIEARKLCHKYWSSVDADVQNQIRSNLLDITLKEPESIVRHAFGRVIAALAKLDLPEGKWNELSAFLVQATMDQNDSIREMAVYVLYSIAETVDLDNKLLLDFVNLFSQTITDSSRTVRVTSVQGLGAIAEVLESDDKKLLHAYRATLPGMLLVLQDVVQVGDVDASKQVFDVFNTFLIASGAIISKALGNIIEIITGIANSKQVDDEIRCMALSFIISCIRFKSRKLQALKLGKPLVLTLMEVATEETTDDIDEDCPARLALRSIDLLSTHLSPSQVFYPMFEAACAFSQSPQASYRKAALLSIGVAVEGSSESVAGNLPNIFPIIINGLCDNDMDVRQAALLALSQIAVEIPTEVSKHHAQLLPLVFELMSTQGVKVGKSACNCIDALLEGLDKSEISGYLPMLMERLVGLLEFSDTPDIKSCVAAAIGSAAFAAQDDFIPYFERTMASLSQCLHTTDDDEGYELRGTVMDTLGAIANAVGKQAFLPYTEQLIQLAYEGIQIDHSRLRECSFCFYAVLARVYKEEFAPFLEHIVPALFKSIDQDESDILSERIGAPTAEEISQLLDSVETNEEENDEELEKAMGVNSAIAMEKEIAADALGEICMYVGAPFTPYLEPTVEKLVACTTHFYEGVRKSALSSLWRCATTYYKVCNVPQWQPGLPLKVPVPDTVKNIFEAVRKCTFDTLEEEYEKTVATDILRNFAESIKTCGPVVLGDDYEKLCEVVMEVLQKQHIVQAGDVFDDDFEEEDIVSNEEVDDTEQDALLIDSACDVVIALAVALGGSFADSFKVFYPQIVKYYMSKNGNERAMAVACVGEVAGGIESAITPFTRDVFSLFMAALEDSEGEVRSNAAYSMGLLCQFSTEDLSSEYLNILQKLQPFFTQEVFRTALDNAIGCISRLILHNQNAIPVDQVLPIVFSKLPLKEDYLENAPLYHMILALYRQQNPCLVQHLGELIPVFASVLTGSPEQLNDELRSELLSMVKEIAPQYESVVSNYPQLVALLQ.

The Importin N-terminal domain maps to 27-94 (ATRALETKYL…RSNLLDITLK (68 aa)). 6 HEAT repeats span residues 159–196 (KLLLDFVNLFSQTITDSSRTVRVTSVQGLGAIAEVLES), 379–416 (GNLPNIFPIIINGLCDNDMDVRQAALLALSQIAVEIPT), 420–457 (KHHAQLLPLVFELMSTQGVKVGKSACNCIDALLEGLDK), 591–633 (PFLE…SVET), 890–927 (PFTRDVFSLFMAALEDSEGEVRSNAAYSMGLLCQFSTE), and 1013–1050 (QHLGELIPVFASVLTGSPEQLNDELRSELLSMVKEIAP).

The protein belongs to the importin beta family.

The protein resides in the cytoplasm. It localises to the nucleus. The protein localises to the nucleus envelope. Its function is as follows. Required for nuclear protein import, its predominant substrate seems to be ribosomal proteins. Binds to nucleoporins and the GTP-bound form of gsp1 (Ran). This is Probable importin subunit beta-4 (kap123) from Schizosaccharomyces pombe (strain 972 / ATCC 24843) (Fission yeast).